Consider the following 409-residue polypeptide: Serine/threonine transporter SstT (409 aa).

The next 9 helical transmembrane spans lie at 17–37, 49–69, 83–103, 142–162, 180–200, 218–238, 299–319, 331–351, and 357–377; these read LVVQ…FFPA, FVSA…MASI, ILLL…IASF, ALIS…GIAF, VSLI…GLVA, LVVL…LIVF, MAGA…TLGI, VVAS…LLLI, and LFGI…IIAI.

It belongs to the dicarboxylate/amino acid:cation symporter (DAACS) (TC 2.A.23) family.

Its subcellular location is the cell inner membrane. The catalysed reaction is L-serine(in) + Na(+)(in) = L-serine(out) + Na(+)(out). It carries out the reaction L-threonine(in) + Na(+)(in) = L-threonine(out) + Na(+)(out). Involved in the import of serine and threonine into the cell, with the concomitant import of sodium (symport system). This Pseudomonas paraeruginosa (strain DSM 24068 / PA7) (Pseudomonas aeruginosa (strain PA7)) protein is Serine/threonine transporter SstT.